Reading from the N-terminus, the 368-residue chain is Nucleotide pyrophosphatase/phosphodiesterase (368 aa).

Belongs to the metallophosphoesterase superfamily. Monomer and homomer. In terms of processing, glycosylated.

It localises to the plastid. The protein resides in the chloroplast. Functionally, hydrolyzes pyrophosphate, phosphodiester and phosphosulfate linkages of nucleotide-sugars, sulfonucleotides and nucleoside di and triphosphates. Highest activity observed with the substrates ADP-glucose and adenosine 5'-phosphosulfate. The chain is Nucleotide pyrophosphatase/phosphodiesterase from Hordeum vulgare (Barley).